The sequence spans 394 residues: 3-dehydroquinate synthase (394 aa).

NAD(+) is bound by residues 112 to 116, 136 to 137, Lys149, Lys158, and 176 to 179; these read GVIGD, TT, and TLAT. The Zn(2+) site is built by Glu191, His254, and His276. Residues 371–388 show a composition bias toward polar residues; it reads STNQHTTYSPHQHATTKP. The interval 371–394 is disordered; the sequence is STNQHTTYSPHQHATTKPPNRRPH.

This sequence belongs to the sugar phosphate cyclases superfamily. Dehydroquinate synthase family. Requires NAD(+) as cofactor. The cofactor is Co(2+). Zn(2+) is required as a cofactor.

Its subcellular location is the cytoplasm. It catalyses the reaction 7-phospho-2-dehydro-3-deoxy-D-arabino-heptonate = 3-dehydroquinate + phosphate. The protein operates within metabolic intermediate biosynthesis; chorismate biosynthesis; chorismate from D-erythrose 4-phosphate and phosphoenolpyruvate: step 2/7. Catalyzes the conversion of 3-deoxy-D-arabino-heptulosonate 7-phosphate (DAHP) to dehydroquinate (DHQ). The polypeptide is 3-dehydroquinate synthase (Xylella fastidiosa (strain 9a5c)).